The chain runs to 421 residues: MAYYLNSEAHLDPGPIYVRENGQLHMVNLALDGVKNSLQKPRPFRLFPKGFSVELCMNREDDTAQKEKTDHFIFTYTREGNLRYSAKSLFSLVLGFISDNVDHIDSLIGFPEQIAEKLFSAAEARQKFTEPGAGLRALQKFTEAYGSLVLCSLCLRNRYLVVAEKLEEIKSFRELTRLDLSCCWLGDEHELLEHLTNEALSSVTQLHLKDNCLSDAGIRKMTAPVRVMKRGLENLALLDLSCNPEITDAGIGYLFSFRKLNCLDISGTGLKDIKAVKDKLRANIGLVHSKVPLKEFDHSNCKTEGWADQIVLQWERVSVEAVRQRKDVEPRKAAQYFYQNRARTEVTRKCPLAETHMNSSGKLQFYREEAPDCHEPLLSQESKKSKKRAFKESEQEQSSPQSAKQKCVCLAVEDWDLLNSY.

LRR repeat units lie at residues 149–170, 174–195, 202–222, 234–255, and 259–280; these read VLCS…EEIK, ELTR…LEHL, SVTQ…RKMT, NLAL…GYLF, and KLNC…KDKL. The interval 376 to 406 is disordered; the sequence is PLLSQESKKSKKRAFKESEQEQSSPQSAKQK. Low complexity predominate over residues 396-406; it reads EQSSPQSAKQK. A Phosphoserine modification is found at serine 399.

The protein belongs to the LRRC42 family.

The protein is Leucine-rich repeat-containing protein 42 (Lrrc42) of Mus musculus (Mouse).